The following is a 208-amino-acid chain: RxLR effector protein Avr1 (208 aa).

A signal peptide spans 1–22; that stretch reads MGLMHRVLLLATFALLCMHAKA. Positions 41–54 match the RxLR-dEER motif; the sequence is RQLRTATMSDDEAR. The segment at 70 to 92 is W1-motif; that stretch reads KIESWIQNKVTDDFVLSELKLVR. Residues 93–110 form a linker region ln1 region; that stretch reads LPGTSLADDPNFKLFQKF. Positions 111 to 136 are W2-motif; it reads KIGGWLEEKATTTKAWENLGLDSLPF. Positions 137-157 are Y-motif; that stretch reads DQVSKIDEFKTYTQYVTVLNK. A linker region ln2 region spans residues 158 to 170; that stretch reads KASKLDIDQWHGL. Positions 170-208 are T-region; sequence LLSGGSPEELMAKAMILRTLGRDVLERRVMLGGHVVVPF.

It belongs to the RxLR effector family. In terms of assembly, interacts with host exocyst component Sec5.

Its subcellular location is the secreted. It localises to the host cytoplasm. It is found in the host nucleus. The protein localises to the host peroxisome. In terms of biological role, secreted effector that acts as an elicitor of hypersensitive response (HR) specifically on plants carrying defense protein R1, through its interaction with this protein. Also acts as a virulence factor that promotes colonization and suppresses cell death induced by CRN2 as well as callose deposition, a hallmark of basal defense. Interacts with host exocyst component Sec5 and thereby disturbs vesicle trafficking, a cellular process that is important for basal defense. By targeting and stabilizing Sec5 in the cytoplasm, the exocyst complex is thus out of balance and not able to mediate the focal secretion of PR-1 and callose. The polypeptide is RxLR effector protein Avr1 (Phytophthora infestans (strain T30-4) (Potato late blight agent)).